The following is a 43-amino-acid chain: Potassium channel toxin gamma-KTx 4.4 (43 aa).

Cystine bridges form between cysteine 5–cysteine 23, cysteine 11–cysteine 34, cysteine 20–cysteine 39, and cysteine 24–cysteine 41.

It belongs to the ergtoxin family. Gamma-KTx 4 subfamily. In terms of tissue distribution, expressed by the venom gland.

The protein localises to the secreted. In terms of biological role, reversibly blocks Kv11/ERG potassium channels. The polypeptide is Potassium channel toxin gamma-KTx 4.4 (Centruroides exilicauda (Bark scorpion)).